The following is a 146-amino-acid chain: Holo-[acyl-carrier-protein] synthase (146 aa).

Residues Asp8 and Glu61 each contribute to the Mg(2+) site.

The protein belongs to the P-Pant transferase superfamily. AcpS family. Mg(2+) serves as cofactor.

Its subcellular location is the cytoplasm. The catalysed reaction is apo-[ACP] + CoA = holo-[ACP] + adenosine 3',5'-bisphosphate + H(+). In terms of biological role, transfers the 4'-phosphopantetheine moiety from coenzyme A to a Ser of acyl-carrier-protein. In Rhodopseudomonas palustris (strain ATCC BAA-98 / CGA009), this protein is Holo-[acyl-carrier-protein] synthase.